A 428-amino-acid polypeptide reads, in one-letter code: Glutamyl-tRNA reductase (428 aa).

Residues 55 to 58, S114, 119 to 121, and Q125 contribute to the substrate site; these read TCNR and ETQ. C56 serves as the catalytic Nucleophile. Residue 194–199 participates in NADP(+) binding; it reads GAGEMI.

The protein belongs to the glutamyl-tRNA reductase family. Homodimer.

The catalysed reaction is (S)-4-amino-5-oxopentanoate + tRNA(Glu) + NADP(+) = L-glutamyl-tRNA(Glu) + NADPH + H(+). It functions in the pathway porphyrin-containing compound metabolism; protoporphyrin-IX biosynthesis; 5-aminolevulinate from L-glutamyl-tRNA(Glu): step 1/2. Its function is as follows. Catalyzes the NADPH-dependent reduction of glutamyl-tRNA(Glu) to glutamate 1-semialdehyde (GSA). This chain is Glutamyl-tRNA reductase, found in Paraburkholderia phytofirmans (strain DSM 17436 / LMG 22146 / PsJN) (Burkholderia phytofirmans).